The sequence spans 832 residues: Translation initiation factor IF-2 (832 aa).

Residues 1–244 (MSDTDGKKTL…KAMGGSQERE (244 aa)) form a disordered region. The segment covering 18–27 (TGQVKQSFSH) has biased composition (polar residues). A compositionally biased stretch (basic and acidic residues) spans 81-141 (KANESEEAER…EARKKAEADA (61 aa)). Over residues 142 to 171 (SSKPAAARSKADDPATMDPAAAQAAEARGA) the composition is skewed to low complexity. Basic and acidic residues-rich tracts occupy residues 178-201 (PRKE…DDRR) and 227-244 (RKQE…QERE). Positions 329-497 (PRPPVITVMG…SIALQAEILE (169 aa)) constitute a tr-type G domain. The tract at residues 338–345 (GHVDHGKT) is G1. GTP is bound at residue 338-345 (GHVDHGKT). The segment at 363–367 (GITQH) is G2. The tract at residues 385–388 (DTPG) is G3. Residues 385–389 (DTPGH) and 439–442 (NKID) each bind GTP. The G4 stretch occupies residues 439–442 (NKID). The segment at 475 to 477 (SAI) is G5.

Belongs to the TRAFAC class translation factor GTPase superfamily. Classic translation factor GTPase family. IF-2 subfamily.

It localises to the cytoplasm. Its function is as follows. One of the essential components for the initiation of protein synthesis. Protects formylmethionyl-tRNA from spontaneous hydrolysis and promotes its binding to the 30S ribosomal subunits. Also involved in the hydrolysis of GTP during the formation of the 70S ribosomal complex. This Dinoroseobacter shibae (strain DSM 16493 / NCIMB 14021 / DFL 12) protein is Translation initiation factor IF-2.